The primary structure comprises 203 residues: uncharacterized protein (203 aa).

The next 4 membrane-spanning stretches (helical) occupy residues 9–29, 42–62, 86–106, and 126–146; these read YNVFVANLALVLGFMLNIVVA, FLFLTPFLGIVAASIFYFFDV, SGVFVFFANILVNVILLALLV, and YPLLWSAVGVSIFLSLISIGL. 2 stretches are compositionally biased toward basic and acidic residues: residues 164–174 and 182–191; these read GEPTAADKTDS and DQTKSKKDGD. Positions 164 to 203 are disordered; sequence GEPTAADKTDSRPVVVDLDQTKSKKDGDNPPQASGDMTSL. Polar residues predominate over residues 194–203; sequence PQASGDMTSL.

It localises to the cell membrane. This is an uncharacterized protein from Mycoplasma pneumoniae (strain ATCC 29342 / M129 / Subtype 1) (Mycoplasmoides pneumoniae).